A 680-amino-acid polypeptide reads, in one-letter code: E3 ubiquitin-protein ligase brl2 (680 aa).

The stretch at 44–72 (RSIQFDELESKIEGLQNLAEEKLKVLATL) forms a coiled coil. Residues 206 to 233 (PQSTKVKEEATTSSKGKDEEKKVSTVEQ) are disordered. Over residues 210–229 (KVKEEATTSSKGKDEEKKVS) the composition is skewed to basic and acidic residues. Coiled coils occupy residues 261–288 (LDSNVNEMDKLIMERENALNNVETTNLK), 353–399 (MQND…ETMV), and 485–609 (DSLH…LKDT). The segment at 627–667 (CSVCNFERWKDRIISLCGHGFCYQCIQKRIETRQRRCPICG) adopts an RING-type zinc-finger fold.

The protein belongs to the BRE1 family. In terms of assembly, component of the histone H2B ubiquitin ligase complex (HULC) composed of at least brl1, brl2, rhp6 and shf1.

The protein resides in the nucleus. The enzyme catalyses S-ubiquitinyl-[E2 ubiquitin-conjugating enzyme]-L-cysteine + [acceptor protein]-L-lysine = [E2 ubiquitin-conjugating enzyme]-L-cysteine + N(6)-ubiquitinyl-[acceptor protein]-L-lysine.. It functions in the pathway protein modification; protein ubiquitination. Its function is as follows. E3 ubiquitin-protein ligase which belongs to the histone H2B ubiquitin ligase complex (HULC) which mediates monoubiquitination of histone H2B to form H2BK123ub1. H2BK123ub1 gives a specific tag for epigenetic transcriptional activation and is also a prerequisite for H3K4me and H3K79me formation. This chain is E3 ubiquitin-protein ligase brl2 (brl2), found in Schizosaccharomyces pombe (strain 972 / ATCC 24843) (Fission yeast).